Reading from the N-terminus, the 533-residue chain is Pre-mRNA-splicing factor cwf24 (533 aa).

Residues 1–17 show a composition bias toward polar residues; the sequence is MEQKNLNINQASGSKIN. The segment at 1 to 69 is disordered; it reads MEQKNLNINQ…MRDNIPIVSG (69 aa). Residues 27–43 are compositionally biased toward basic residues; sequence SRRRHRPRQGLKRKKGF. Residues 184–212 form a C3H1-type zinc finger; that stretch reads DYQPDVCKDYKLTGYCGYGDTCKFLHMRE. The RING-type zinc finger occupies 254 to 292; the sequence is CLICKKDYRSPIATTCGHHFCEQCAITRYRKTPTCIQCG. The N-acetyltransferase domain occupies 379–524; it reads YFIREITESN…SAFYMVCPLS (146 aa).

The protein belongs to the CWC24 family. In terms of assembly, belongs to the 40S cdc5-associated complex (or cwf complex), a spliceosome sub-complex reminiscent of a late-stage spliceosome composed of the U2, U5 and U6 snRNAs and at least brr2, cdc5, cwf2/prp3, cwf3/syf1, cwf4/syf3, cwf5/ecm2, spp42/cwf6, cwf7/spf27, cwf8, cwf9, cwf10, cwf11, cwf12, prp45/cwf13, cwf14, cwf15, cwf16, cwf17, cwf18, cwf19, cwf20, cwf21, cwf22, cwf23, cwf24, cwf25, cwf26, cyp7/cwf27, cwf28, cwf29/ist3, lea1, msl1, prp5/cwf1, prp10, prp12/sap130, prp17, prp22, sap61, sap62, sap114, sap145, slu7, smb1, smd1, smd3, smf1, smg1 and syf2.

It localises to the nucleus. Involved in mRNA splicing. This is Pre-mRNA-splicing factor cwf24 (cwf24) from Schizosaccharomyces pombe (strain 972 / ATCC 24843) (Fission yeast).